The sequence spans 806 residues: Transitional endoplasmic reticulum ATPase (806 aa).

Ala2 carries the N-acetylalanine modification. Phosphoserine occurs at positions 3 and 7. A Glycyl lysine isopeptide (Lys-Gly) (interchain with G-Cter in SUMO2) cross-link involves residue Lys8. Ser13 is subject to Phosphoserine. Residue Lys18 forms a Glycyl lysine isopeptide (Lys-Gly) (interchain with G-Cter in SUMO2) linkage. Phosphoserine is present on Ser37. Residue 247-253 (PGTGKTL) coordinates ATP. N6,N6,N6-trimethyllysine; by VCPKMT is present on Lys315. Asn348 and His384 together coordinate ATP. Thr436 carries the phosphothreonine modification. Ser462 carries the phosphoserine modification. Residues Lys502 and Lys505 each carry the N6-acetyllysine modification. 521–526 (GCGKTL) serves as a coordination point for ATP. Residue Lys668 is modified to N6-acetyllysine; alternate. Residue Lys668 is modified to N6-succinyllysine; alternate. Ser702 bears the Phosphoserine mark. The interval 708–727 (RRERERQTNPSAMEVEEDDP) is disordered. At Lys754 the chain carries N6-acetyllysine. A disordered region spans residues 768-806 (FGSFRFPSGNQGGAGPSQGSGGGTGGNVYTEDNDDDLYG). Ser770, Ser775, and Ser787 each carry phosphoserine. Residues 777–793 (NQGGAGPSQGSGGGTGG) show a composition bias toward gly residues. The interval 797–806 (TEDNDDDLYG) is interaction with UBXN6. A PIM motif motif is present at residues 802–806 (DDLYG). Phosphotyrosine is present on Tyr805.

Belongs to the AAA ATPase family. As to quaternary structure, homohexamer. Forms a ring-shaped particle of 12.5 nm diameter, that displays 6-fold radial symmetry. Interacts with NSFL1C-like protein p37; the complex has membrane fusion activity and is required for Golgi and endoplasmic reticulum biogenesis. Interacts with RHBDD1 (via C-terminal domain). Interacts with SELENOS and SYVN1, as well as with DERL1 (via SHP-box motif), DERL2 and DERL3; which probably transfer misfolded proteins from the ER to VCP. Interacts with SVIP and DERL1. Component of a complex required to couple retrotranslocation, ubiquitination and deglycosylation composed of NGLY1, SAKS1, AMFR, VCP and RAD23B. Part of a complex composed of STUB1/CHIP, VCP/p97, CHRNA3, and UBXN2A that modulates the ubiquitination and endoplasmic reticulum-associated degradation (ERAD) of CHRNA3. Within the complex UBXN2A acts as a scaffold protein required for the interaction of CHRNA3 with VCP/p97, this interaction also inhibits CHRNA3 ubiquitination by STUB1/CHIP and subsequently ERAD. Interacts with UBXN2A (via UBX domain); the interaction is required for the interaction of CHRNA3 in the STUB1-VCP-UBXN2A complex. Directly interacts with UBXN4 and RNF19A. Interacts with CASR. Interacts with UBE4B and YOD1. Interacts with clathrin. Interacts with RNF103. Interacts with TRIM13 and TRIM21. Component of a VCP/p97-AMFR/gp78 complex that participates in the final step of the endoplasmic reticulum-associated degradation (ERAD) of HMGCR. Interacts directly with AMFR/gp78 (via its VIM). Interacts with SPRTN; leading to recruitment to stalled replication forks. Part of a ternary complex containing STX5A, NSFL1C and VCP. NSFL1C forms a homotrimer that binds to one end of a VCP homohexamer. The complex binds to membranes enriched in phosphatidylethanolamine-containing lipids and promotes Golgi membrane fusion. Binds to a heterodimer of NPLOC4 and UFD1, binding to this heterodimer inhibits Golgi-membrane fusion. Interaction with VCIP135 leads to dissociation of the complex via ATP hydrolysis by VCP. Part of a ternary complex containing NPLOC4, UFD1 and VCP. Interacts with WASHC5. Interacts with UBOX5. Interacts (via N-terminus) with UBXN7, UBXN8, and probably several other UBX domain-containing proteins (via UBX domains); the interactions are mutually exclusive with VIM-dependent interactions such as those with AMFR and SELENOS. Forms a complex with UBQLN1 and UBXN4. Interacts (via the PIM motif) with RNF31 (via the PUB domain). Interacts with RIGI and RNF125; interaction takes place when RIGI is ubiquitinated via 'Lys-63'-linked ubiquitin on its CARD domains, leading to recruit RNF125 and promote ubiquitination and degradation of RIGI. Interacts with BAG6. Interacts with UBXN10. Interacts with UBXN6; the interaction with UBXN6 is direct and competitive with UFD1. Forms a ternary complex with CAV1 and UBXN6. Interacts with PLAA, UBXN6 and YOD1; may form a complex involved in macroautophagy. Interacts with ANKZF1. Interacts with ubiquitin-binding protein FAF1. Interacts with ZFAND2B (via VIM motif); the interaction is direct. Interacts with ZFAND1 (via its ubiquitin-like region); this interaction occurs in an arsenite-dependent manner. Interacts with CCDC47. Interacts with LMBR1L and UBAC2. Interacts with ATXN3. Interacts with TEX264; bridging VCP to covalent DNA-protein cross-links (DPCs). Phosphorylated by tyrosine kinases in response to T-cell antigen receptor activation. Phosphorylated in mitotic cells. Post-translationally, ISGylated. In terms of processing, methylation at Lys-315 catalyzed by VCPKMT is increased in the presence of ASPSCR1. Lys-315 methylation may decrease ATPase activity.

Its subcellular location is the cytoplasm. The protein localises to the cytosol. The protein resides in the endoplasmic reticulum. It is found in the nucleus. It localises to the stress granule. It catalyses the reaction ATP + H2O = ADP + phosphate + H(+). Necessary for the fragmentation of Golgi stacks during mitosis and for their reassembly after mitosis. Involved in the formation of the transitional endoplasmic reticulum (tER). The transfer of membranes from the endoplasmic reticulum to the Golgi apparatus occurs via 50-70 nm transition vesicles which derive from part-rough, part-smooth transitional elements of the endoplasmic reticulum (tER). Vesicle budding from the tER is an ATP-dependent process. The ternary complex containing UFD1, VCP and NPLOC4 binds ubiquitinated proteins and is necessary for the export of misfolded proteins from the ER to the cytoplasm, where they are degraded by the proteasome. The NPLOC4-UFD1-VCP complex regulates spindle disassembly at the end of mitosis and is necessary for the formation of a closed nuclear envelope. Regulates E3 ubiquitin-protein ligase activity of RNF19A. Component of the VCP/p97-AMFR/gp78 complex that participates in the final step of the sterol-mediated ubiquitination and endoplasmic reticulum-associated degradation (ERAD) of HMGCR. Mediates the endoplasmic reticulum-associated degradation of CHRNA3 in cortical neurons as part of the STUB1-VCP-UBXN2A complex. Involved in endoplasmic reticulum stress-induced pre-emptive quality control, a mechanism that selectively attenuates the translocation of newly synthesized proteins into the endoplasmic reticulum and reroutes them to the cytosol for proteasomal degradation. Involved in clearance process by mediating G3BP1 extraction from stress granules. Also involved in DNA damage response: recruited to double-strand breaks (DSBs) sites in a RNF8- and RNF168-dependent manner and promotes the recruitment of TP53BP1 at DNA damage sites. Recruited to stalled replication forks by SPRTN: may act by mediating extraction of DNA polymerase eta (POLH) to prevent excessive translesion DNA synthesis and limit the incidence of mutations induced by DNA damage. Together with SPRTN metalloprotease, involved in the repair of covalent DNA-protein cross-links (DPCs) during DNA synthesis. Involved in interstrand cross-link repair in response to replication stress by mediating unloading of the ubiquitinated CMG helicase complex. Mediates extraction of PARP1 trapped to chromatin: recognizes and binds ubiquitinated PARP1 and promotes its removal. Required for cytoplasmic retrotranslocation of stressed/damaged mitochondrial outer-membrane proteins and their subsequent proteasomal degradation. Essential for the maturation of ubiquitin-containing autophagosomes and the clearance of ubiquitinated protein by autophagy. Acts as a negative regulator of type I interferon production by interacting with RIGI: interaction takes place when RIGI is ubiquitinated via 'Lys-63'-linked ubiquitin on its CARD domains, leading to recruit RNF125 and promote ubiquitination and degradation of RIGI. May play a role in the ubiquitin-dependent sorting of membrane proteins to lysosomes where they undergo degradation. May more particularly play a role in caveolins sorting in cells. By controlling the steady-state expression of the IGF1R receptor, indirectly regulates the insulin-like growth factor receptor signaling pathway. This is Transitional endoplasmic reticulum ATPase (Vcp) from Rattus norvegicus (Rat).